Consider the following 316-residue polypeptide: Phosphatidylinositol mannoside acyltransferase (316 aa).

The active-site Proton acceptor is His-137. Hexadecanoyl-CoA contacts are provided by His-137 and Arg-175. Glu-211 is a catalytic residue. Glu-240 is a binding site for hexadecanoyl-CoA.

It belongs to the LpxL/LpxM/LpxP family.

The protein resides in the cell inner membrane. The catalysed reaction is a 2,6-O-bis(alpha-D-mannopyranosyl)-1-phosphatidyl-1D-myo-inositol + an acyl-CoA = a 2-O-(alpha-D-mannosyl)-6-O-(6-O-acyl-alpha-D-mannosyl)-1-phosphatidyl-1D-myo-inositol + CoA. It carries out the reaction a 1,2-diacyl-sn-glycero-3-phospho-[alpha-D-mannopyranosyl-(1&lt;-&gt;6)-D-myo-inositol] + an acyl-CoA = a 1,2-diacyl-sn-glycero-3-phospho-[alpha-D-6-acyl-mannopyranosyl-(1&lt;-&gt;6)-D-myo-inositol] + CoA. Its pathway is phospholipid metabolism; phosphatidylinositol metabolism. Catalyzes the transfer of a palmitoyl moiety from palmitoyl-CoA to the 6-position of the mannose ring linked to the 2-position of myo-inositol in phosphatidyl-myo-inositol monomannoside (PIM1) or dimannoside (PIM2). Essential for growth and survival in axenic cultures and during macrophage infection and in a mouse model of infection. The polypeptide is Phosphatidylinositol mannoside acyltransferase (Mycobacterium tuberculosis (strain ATCC 25618 / H37Rv)).